Consider the following 245-residue polypeptide: 4-hydroxy-tetrahydrodipicolinate reductase (245 aa).

NAD(+) contacts are provided by residues 7 to 12 (GAKGKV), 75 to 77 (GTT), and 102 to 105 (APNF). The active-site Proton donor/acceptor is H132. Position 133 (H133) interacts with (S)-2,3,4,5-tetrahydrodipicolinate. Residue K136 is the Proton donor of the active site. A (S)-2,3,4,5-tetrahydrodipicolinate-binding site is contributed by 142–143 (GT).

Belongs to the DapB family.

It is found in the cytoplasm. It catalyses the reaction (S)-2,3,4,5-tetrahydrodipicolinate + NAD(+) + H2O = (2S,4S)-4-hydroxy-2,3,4,5-tetrahydrodipicolinate + NADH + H(+). It carries out the reaction (S)-2,3,4,5-tetrahydrodipicolinate + NADP(+) + H2O = (2S,4S)-4-hydroxy-2,3,4,5-tetrahydrodipicolinate + NADPH + H(+). It functions in the pathway amino-acid biosynthesis; L-lysine biosynthesis via DAP pathway; (S)-tetrahydrodipicolinate from L-aspartate: step 4/4. Functionally, catalyzes the conversion of 4-hydroxy-tetrahydrodipicolinate (HTPA) to tetrahydrodipicolinate. The polypeptide is 4-hydroxy-tetrahydrodipicolinate reductase (Mycobacterium bovis (strain ATCC BAA-935 / AF2122/97)).